Here is a 403-residue protein sequence, read N- to C-terminus: Propionate kinase (403 aa).

The protein belongs to the acetokinase family. PduW subfamily.

Its subcellular location is the cytoplasm. It catalyses the reaction propanoate + ATP = propanoyl phosphate + ADP. Its pathway is polyol metabolism; 1,2-propanediol degradation. Works with phosphate acetyltransferase (pta) to capture exogenous propionate and regenerate propionyl-CoA during degradation of 1,2-propanediol (1,2-PD). The chain is Propionate kinase from Citrobacter rodentium (strain ICC168) (Citrobacter freundii biotype 4280).